We begin with the raw amino-acid sequence, 309 residues long: MMLFKNRHVISMKDFSREEIDYILDIAEKLEPVARGEERSRLLDGKIISLLFFEPSTRTRLSFEVATRRLGGQVLSLGSVEASSVMKGENLADTIRVISKYADLIVLRHPLDGSARMATEFAAVPVINGGDGSVHHPTQTFLDLYTIRRESHLEGLKIAMAGDLKYGRTVHSLCYALSLYGAEMTFVSPPELRMPREIVRELRKKNIRVKESECLEEIIGDIEVLYMTRVQRERFPDPQEYEKVKNKLKITGDLLKSADPELKILHPLPRVNEISPDVDDTPHARYFEQAFYGVPIRMALLALTIGVIE.

Positions 58 and 59 each coordinate carbamoyl phosphate. Lysine 87 contributes to the L-aspartate binding site. Carbamoyl phosphate contacts are provided by arginine 108, histidine 136, and glutamine 139. L-aspartate-binding residues include arginine 168 and arginine 229. Carbamoyl phosphate-binding residues include leucine 268 and proline 269.

Belongs to the aspartate/ornithine carbamoyltransferase superfamily. ATCase family. As to quaternary structure, heterooligomer of catalytic and regulatory chains.

The catalysed reaction is carbamoyl phosphate + L-aspartate = N-carbamoyl-L-aspartate + phosphate + H(+). It participates in pyrimidine metabolism; UMP biosynthesis via de novo pathway; (S)-dihydroorotate from bicarbonate: step 2/3. Catalyzes the condensation of carbamoyl phosphate and aspartate to form carbamoyl aspartate and inorganic phosphate, the committed step in the de novo pyrimidine nucleotide biosynthesis pathway. This chain is Aspartate carbamoyltransferase catalytic subunit, found in Methanosarcina mazei (strain ATCC BAA-159 / DSM 3647 / Goe1 / Go1 / JCM 11833 / OCM 88) (Methanosarcina frisia).